Here is a 380-residue protein sequence, read N- to C-terminus: Chaperone protein DnaJ (380 aa).

Residues 5-70 (DFYETLGVSK…QKRAAYDRFG (66 aa)) form the J domain. The segment at 141–219 (GKTAQIRVPT…CHGQGRVTEE (79 aa)) adopts a CR-type zinc-finger fold. Zn(2+)-binding residues include Cys-154, Cys-157, Cys-171, Cys-174, Cys-193, Cys-196, Cys-207, and Cys-210. CXXCXGXG motif repeat units follow at residues 154–161 (CEVCSGSG), 171–178 (CATCQGSG), 193–200 (CPTCQGRG), and 207–214 (CGKCHGQG).

It belongs to the DnaJ family. As to quaternary structure, homodimer. Requires Zn(2+) as cofactor.

Its subcellular location is the cytoplasm. Functionally, participates actively in the response to hyperosmotic and heat shock by preventing the aggregation of stress-denatured proteins and by disaggregating proteins, also in an autonomous, DnaK-independent fashion. Unfolded proteins bind initially to DnaJ; upon interaction with the DnaJ-bound protein, DnaK hydrolyzes its bound ATP, resulting in the formation of a stable complex. GrpE releases ADP from DnaK; ATP binding to DnaK triggers the release of the substrate protein, thus completing the reaction cycle. Several rounds of ATP-dependent interactions between DnaJ, DnaK and GrpE are required for fully efficient folding. Also involved, together with DnaK and GrpE, in the DNA replication of plasmids through activation of initiation proteins. The polypeptide is Chaperone protein DnaJ (Allorhizobium ampelinum (strain ATCC BAA-846 / DSM 112012 / S4) (Agrobacterium vitis (strain S4))).